The following is a 185-amino-acid chain: Potassium-transporting ATPase KdpC subunit (185 aa).

Residues 14–34 form a helical membrane-spanning segment; that stretch reads ALSLLTGVAYPLALTGIAAVI.

It belongs to the KdpC family. In terms of assembly, the system is composed of three essential subunits: KdpA, KdpB and KdpC.

The protein localises to the cell inner membrane. In terms of biological role, part of the high-affinity ATP-driven potassium transport (or Kdp) system, which catalyzes the hydrolysis of ATP coupled with the electrogenic transport of potassium into the cytoplasm. This subunit acts as a catalytic chaperone that increases the ATP-binding affinity of the ATP-hydrolyzing subunit KdpB by the formation of a transient KdpB/KdpC/ATP ternary complex. The chain is Potassium-transporting ATPase KdpC subunit from Cereibacter sphaeroides (strain KD131 / KCTC 12085) (Rhodobacter sphaeroides).